The sequence spans 208 residues: Neuroendocrine protein 7B2 (208 aa).

The N-terminal stretch at 1 to 26 (MGMYSAIPLALPMVLLMVYGLTPSLG) is a signal peptide. An intrachain disulfide couples Cys120 to Cys129. Ser204 bears the Phosphoserine mark.

It belongs to the 7B2 family. As to quaternary structure, interacts with pcsk2 early in the secretory pathway. Dissociation occurs at later stages. In terms of processing, proteolytically cleaved in the Golgi by a furin-like convertase to generate bioactive peptides. Sulfated on tyrosine residues.

The protein resides in the secreted. Functionally, acts as a molecular chaperone for pcsk2, preventing its premature activation in the regulated secretory pathway. Binds to inactive pcsk2 in the endoplasmic reticulum and facilitates its transport from there to later compartments of the secretory pathway where it is proteolytically matured and activated. Also required for cleavage of pcsk2 but does not appear to be involved in its folding. The sequence is that of Neuroendocrine protein 7B2 (scg5.L) from Xenopus laevis (African clawed frog).